Consider the following 59-residue polypeptide: MIGNTLFDRRMLEALVCPVTQAGLAYDADRQELISKQARLAFPIRDGIPIMLVSEAREL.

Belongs to the UPF0434 family.

This chain is UPF0434 protein Rsph17029_0141, found in Cereibacter sphaeroides (strain ATCC 17029 / ATH 2.4.9) (Rhodobacter sphaeroides).